The sequence spans 100 residues: Small ribosomal subunit protein uS14c (100 aa).

The protein belongs to the universal ribosomal protein uS14 family. Part of the 30S ribosomal subunit.

It localises to the plastid. The protein resides in the chloroplast. In terms of biological role, binds 16S rRNA, required for the assembly of 30S particles. The sequence is that of Small ribosomal subunit protein uS14c from Thalassiosira pseudonana (Marine diatom).